The primary structure comprises 78 residues: Large ribosomal subunit protein bL28 (78 aa).

Belongs to the bacterial ribosomal protein bL28 family.

This chain is Large ribosomal subunit protein bL28, found in Haemophilus influenzae (strain 86-028NP).